A 300-amino-acid polypeptide reads, in one-letter code: Putative heme-binding peroxidase (300 aa).

Histidine 39 acts as the Proton acceptor in catalysis. Disordered regions lie at residues tyrosine 44–glycine 64 and glycine 116–alanine 135. Residues glycine 116–valine 126 show a composition bias toward basic and acidic residues. Heme b is bound at residue histidine 163. The Tryptophan radical intermediate role is filled by tryptophan 179.

The protein belongs to the peroxidase family. Cytochrome c peroxidase subfamily. The cofactor is heme b.

In terms of biological role, destroys radicals which are normally produced within the cells and which are toxic to biological systems. The polypeptide is Putative heme-binding peroxidase (Pyricularia oryzae (strain 70-15 / ATCC MYA-4617 / FGSC 8958) (Rice blast fungus)).